The primary structure comprises 198 residues: Small ribosomal subunit protein uS7 (198 aa).

Belongs to the universal ribosomal protein uS7 family. In terms of assembly, part of the 30S ribosomal subunit.

Functionally, one of the primary rRNA binding proteins, it binds directly to 16S rRNA where it nucleates assembly of the head domain of the 30S subunit. Is located at the subunit interface close to the decoding center. The protein is Small ribosomal subunit protein uS7 of Desulfurococcus amylolyticus (strain DSM 18924 / JCM 16383 / VKM B-2413 / 1221n) (Desulfurococcus kamchatkensis).